Here is a 470-residue protein sequence, read N- to C-terminus: Leucine-rich repeat extensin-like protein 6 (470 aa).

The signal sequence occupies residues M1–T28. N-linked (GlcNAc...) asparagine glycosylation occurs at N83. LRR repeat units follow at residues V98–L122, T123–L146, H147–L170, P171–L194, L196–S217, V219–M241, K243–L265, L266–M290, K291–L314, and R316–L337. N319 is a glycosylation site (N-linked (GlcNAc...) asparagine). Residues S378–P411 are disordered. A contains the Ser-Pro(4) repeats region spans residues S378–Y470.

Hydroxylated on proline residues in the S-P-P-P-P repeat. Post-translationally, O-glycosylated on hydroxyprolines. In terms of tissue distribution, expressed in roots.

The protein resides in the secreted. The protein localises to the cell wall. Functionally, modulates cell morphogenesis by regulating cell wall formation and assembly, and/or growth polarization. The sequence is that of Leucine-rich repeat extensin-like protein 6 (LRX6) from Arabidopsis thaliana (Mouse-ear cress).